Reading from the N-terminus, the 178-residue chain is Cytidylate kinase 2 (178 aa).

7–15 (GKSGCGNTT) contacts ATP.

The protein belongs to the cytidylate kinase family. Type 2 subfamily.

It is found in the cytoplasm. It carries out the reaction CMP + ATP = CDP + ADP. It catalyses the reaction dCMP + ATP = dCDP + ADP. This chain is Cytidylate kinase 2, found in Borreliella afzelii (strain PKo) (Borrelia afzelii).